Consider the following 253-residue polypeptide: 5-oxoprolinase subunit A (253 aa).

This sequence belongs to the LamB/PxpA family. In terms of assembly, forms a complex composed of PxpA, PxpB and PxpC.

It carries out the reaction 5-oxo-L-proline + ATP + 2 H2O = L-glutamate + ADP + phosphate + H(+). Functionally, catalyzes the cleavage of 5-oxoproline to form L-glutamate coupled to the hydrolysis of ATP to ADP and inorganic phosphate. In Bacillus thuringiensis subsp. konkukian (strain 97-27), this protein is 5-oxoprolinase subunit A.